The primary structure comprises 379 residues: Citrate utilization protein B (379 aa).

The [4Fe-4S] cluster site is built by C28, C31, C34, C38, C62, C65, C68, and C72.

The sequence is that of Citrate utilization protein B (citB) from Escherichia coli.